The chain runs to 461 residues: F-box protein At3g62230 (461 aa).

Residues 7 to 55 (VDIISTLSDFLLVLIISNLSFKEALSTSRLSTRWRHICRETRNISFRED) enclose the F-box domain.

In terms of assembly, part of a SCF (ASK-cullin-F-box) protein ligase complex. Interacts with ASK4.

The protein resides in the nucleus. It functions in the pathway protein modification; protein ubiquitination. Functionally, component of SCF(ASK-cullin-F-box) E3 ubiquitin ligase complexes, which may mediate the ubiquitination and subsequent proteasomal degradation of target proteins. The sequence is that of F-box protein At3g62230 from Arabidopsis thaliana (Mouse-ear cress).